The primary structure comprises 548 residues: Membrane protein insertase YidC (548 aa).

Residues Asn6–Asp26 traverse the membrane as a helical segment. Residues Asn28–Ala54 form a disordered region. Residues Pro29–Thr42 show a composition bias toward low complexity. Transmembrane regions (helical) follow at residues Phe350 to Tyr370, Phe424 to Ile444, Leu458 to Ile478, and Pro499 to Val519.

The protein belongs to the OXA1/ALB3/YidC family. Type 1 subfamily. Interacts with the Sec translocase complex via SecD. Specifically interacts with transmembrane segments of nascent integral membrane proteins during membrane integration.

It localises to the cell inner membrane. Required for the insertion and/or proper folding and/or complex formation of integral membrane proteins into the membrane. Involved in integration of membrane proteins that insert both dependently and independently of the Sec translocase complex, as well as at least some lipoproteins. Aids folding of multispanning membrane proteins. The chain is Membrane protein insertase YidC from Salmonella arizonae (strain ATCC BAA-731 / CDC346-86 / RSK2980).